We begin with the raw amino-acid sequence, 218 residues long: Glutathione S-transferase Mu 1 (218 aa).

A GST N-terminal domain is found at 2 to 88 (PMILGYWNVR…YLARKHHLCG (87 aa)). Glutathione-binding positions include 7-8 (YW), 43-46 (RSQW), Lys-50, and 59-60 (NL). The residue at position 67 (Ser-67) is a Phosphoserine. Glutathione is bound at residue 72–73 (QS). The GST C-terminal domain occupies 90–208 (TEEERIRADI…KSSRYLSTPI (119 aa)). Tyr-116 is a binding site for substrate. Phosphoserine is present on residues Ser-205 and Ser-210.

It belongs to the GST superfamily. Mu family. In terms of assembly, homodimer or heterodimer.

The protein localises to the cytoplasm. The catalysed reaction is RX + glutathione = an S-substituted glutathione + a halide anion + H(+). It catalyses the reaction prostaglandin A2 + glutathione = prostaglandin A2-S-(R)-glutathione. The enzyme catalyses prostaglandin J2 + glutathione = prostaglandin J2-S-(R)-glutathione. It carries out the reaction prostaglandin J2 + glutathione = prostaglandin J2-S-(S)-glutathione. The catalysed reaction is prostaglandin A2 + glutathione = prostaglandin A2-S-(S)-glutathione. It catalyses the reaction 11(S)-hydroxy-14(S),15(S)-epoxy-(5Z,8Z,12E)-eicosatrienoate + glutathione = (11S,15S)-dihydroxy-14(R)-S-glutathionyl-(5Z,8Z,12E)-eicosatrienoate. Conjugation of reduced glutathione to a wide number of exogenous and endogenous hydrophobic electrophiles. The olfactory GST may be crucial for the acuity of the olfactory process. Participates in the formation of novel hepoxilin regioisomers. The polypeptide is Glutathione S-transferase Mu 1 (Rattus norvegicus (Rat)).